The chain runs to 387 residues: 3-ketoacyl-CoA thiolase (387 aa).

The active-site Acyl-thioester intermediate is the C91. Active-site proton acceptor residues include H343 and C373.

It belongs to the thiolase-like superfamily. Thiolase family. As to quaternary structure, heterotetramer of two alpha chains (FadB) and two beta chains (FadA).

The protein resides in the cytoplasm. It catalyses the reaction an acyl-CoA + acetyl-CoA = a 3-oxoacyl-CoA + CoA. The protein operates within lipid metabolism; fatty acid beta-oxidation. Catalyzes the final step of fatty acid oxidation in which acetyl-CoA is released and the CoA ester of a fatty acid two carbons shorter is formed. This is 3-ketoacyl-CoA thiolase from Vibrio cholerae serotype O1 (strain ATCC 39315 / El Tor Inaba N16961).